A 270-amino-acid chain; its full sequence is Formamidopyrimidine-DNA glycosylase (270 aa).

Pro-2 functions as the Schiff-base intermediate with DNA in the catalytic mechanism. The active-site Proton donor is Glu-3. The active-site Proton donor; for beta-elimination activity is the Lys-58. Residues His-91, Arg-110, and Arg-151 each contribute to the DNA site. The FPG-type zinc-finger motif lies at 236–270 (RVYDREDAPCRRCATPIRRIVQAQRASFYCPTCQR). Catalysis depends on Arg-260, which acts as the Proton donor; for delta-elimination activity.

Belongs to the FPG family. In terms of assembly, monomer. Requires Zn(2+) as cofactor.

It catalyses the reaction Hydrolysis of DNA containing ring-opened 7-methylguanine residues, releasing 2,6-diamino-4-hydroxy-5-(N-methyl)formamidopyrimidine.. The enzyme catalyses 2'-deoxyribonucleotide-(2'-deoxyribose 5'-phosphate)-2'-deoxyribonucleotide-DNA = a 3'-end 2'-deoxyribonucleotide-(2,3-dehydro-2,3-deoxyribose 5'-phosphate)-DNA + a 5'-end 5'-phospho-2'-deoxyribonucleoside-DNA + H(+). In terms of biological role, involved in base excision repair of DNA damaged by oxidation or by mutagenic agents. Acts as a DNA glycosylase that recognizes and removes damaged bases. Has a preference for oxidized purines, such as 7,8-dihydro-8-oxoguanine (8-oxoG). Has AP (apurinic/apyrimidinic) lyase activity and introduces nicks in the DNA strand. Cleaves the DNA backbone by beta-delta elimination to generate a single-strand break at the site of the removed base with both 3'- and 5'-phosphates. The protein is Formamidopyrimidine-DNA glycosylase of Thiobacillus denitrificans (strain ATCC 25259 / T1).